The sequence spans 316 residues: NAC domain-containing protein 2 (316 aa).

Positions 17–170 (LPPGFRFHPT…DWVLCRLYNK (154 aa)) constitute an NAC domain. Residues 114–176 (LGIKKALVFY…LYNKKNEWEK (63 aa)) mediate DNA binding. The disordered stretch occupies residues 185–210 (EEASDMVTSQSHSHTHSWGETRTPES). The span at 190–200 (MVTSQSHSHTH) shows a compositional bias: polar residues.

In terms of assembly, forms homodimer. Interacts with NAC071. Expressed in roots and stamens.

The protein localises to the nucleus. Its function is as follows. Transcription factor that possesses transactivation activity. Transcription activator involved in response to abiotic stresses. Plays a positive role during dehydration and salt stress. Binds specifically to the 5'-CATGTG-3' motif found in promoters of stress-responsive genes. The polypeptide is NAC domain-containing protein 2 (Oryza sativa subsp. japonica (Rice)).